Reading from the N-terminus, the 247-residue chain is ATP synthase subunit a, chloroplastic (247 aa).

Helical transmembrane passes span 38 to 58 (QVLITSWVVIAILLGSAAIAV), 95 to 115 (VPFIGTMFLFIFVSNWSGALL), 134 to 154 (INTTVALALLTSVAYFYAGLT), 199 to 219 (LVVVVLVSLVPLVVPIPVMFL), and 220 to 240 (GLFTSGIQALIFATLAAAYIG).

This sequence belongs to the ATPase A chain family. F-type ATPases have 2 components, CF(1) - the catalytic core - and CF(0) - the membrane proton channel. CF(1) has five subunits: alpha(3), beta(3), gamma(1), delta(1), epsilon(1). CF(0) has four main subunits: a, b, b' and c.

The protein resides in the plastid. It is found in the chloroplast thylakoid membrane. In terms of biological role, key component of the proton channel; it plays a direct role in the translocation of protons across the membrane. The sequence is that of ATP synthase subunit a, chloroplastic (atpI) from Spinacia oleracea (Spinach).